A 443-amino-acid chain; its full sequence is Acyl transferase 10 (443 aa).

Residues His182 and Asp386 each act as proton acceptor in the active site.

It belongs to the plant acyltransferase family.

Its function is as follows. Involved in the incorporation of ferulate into the cell wall. May act as arabinoxylan feruloyl transferase. May function as p-coumaroyl-CoA transferase involved in glucuronoarabinoxylan modification. The chain is Acyl transferase 10 from Oryza sativa subsp. japonica (Rice).